The chain runs to 152 residues: HTH-type transcriptional regulator SlrR (152 aa).

Residues 6–61 (IRLYRKRKGYSINQLAVESGVSKSYLSKIERGVHTNPSVQFLKKVSATLEVELTEL) enclose the HTH cro/C1-type domain. Residues 17 to 36 (INQLAVESGVSKSYLSKIER) constitute a DNA-binding region (H-T-H motif). A Sin domain is found at 113–151 (YRNRKLTESNIEEWKALMAEAREIGLSVHEVKSFLKTKG).

In terms of assembly, component of the SlrR/SlrA complex.

Its function is as follows. Represses sigma(D)-dependent flagellar genes and activate the eps and yqxM operons. Repressor activity is regulated by SlrA. Controls the initiation of biofilm formation. The sequence is that of HTH-type transcriptional regulator SlrR (slrR) from Bacillus subtilis (strain 168).